Here is a 206-residue protein sequence, read N- to C-terminus: Ribosomal RNA small subunit methyltransferase G (206 aa).

S-adenosyl-L-methionine contacts are provided by residues G73, L78, V124–E125, and R139.

The protein belongs to the methyltransferase superfamily. RNA methyltransferase RsmG family.

The protein localises to the cytoplasm. The catalysed reaction is guanosine(527) in 16S rRNA + S-adenosyl-L-methionine = N(7)-methylguanosine(527) in 16S rRNA + S-adenosyl-L-homocysteine. Its function is as follows. Specifically methylates the N7 position of guanine in position 527 of 16S rRNA. The sequence is that of Ribosomal RNA small subunit methyltransferase G from Sodalis glossinidius (strain morsitans).